A 435-amino-acid chain; its full sequence is MSQTVNIVGAGLAGSEAAYQLAQRGIKVNLIEMRPVKQTPAHHTDKFAELVCSNSLRGNALTNGVGVLKEEMRRLDSLIISAADKARVPAGGALAVDRHDFSGYITETLRNHPNVTVINEEINSIPEGYTIIATGPLTTENLAKEIVDITGKDQLYFYDAAAPIIEKESIDMDKVYLKSRYDKGEAAYLNCPMTEEEFNRFYDAVLEAEVAPTNEFEKEKYFEGCMPFEVMAERGRKTLLFGPMKPVGLEDPKTGKRPFAVVQLRQDDAAGTLYNIVGFQTHLKWGAQKEVIRLIPGLENVDIVRYGVMHRNTFINSPDVLNEKYELIKEDRIQFAGQMTGVEGYVESAASGLVAGINLAHKLLDKGEVIFPRETMIGSMAYYISHAKNEKNFQPMNANFGLLPSLEKRIKDKKERYEAQANRALEYLENYKKTL.

9–14 (GAGLAG) contacts FAD.

The protein belongs to the MnmG family. TrmFO subfamily. The cofactor is FAD.

The protein resides in the cytoplasm. It carries out the reaction uridine(54) in tRNA + (6R)-5,10-methylene-5,6,7,8-tetrahydrofolate + NADH + H(+) = 5-methyluridine(54) in tRNA + (6S)-5,6,7,8-tetrahydrofolate + NAD(+). It catalyses the reaction uridine(54) in tRNA + (6R)-5,10-methylene-5,6,7,8-tetrahydrofolate + NADPH + H(+) = 5-methyluridine(54) in tRNA + (6S)-5,6,7,8-tetrahydrofolate + NADP(+). Functionally, catalyzes the folate-dependent formation of 5-methyl-uridine at position 54 (M-5-U54) in all tRNAs. The protein is Methylenetetrahydrofolate--tRNA-(uracil-5-)-methyltransferase TrmFO of Staphylococcus haemolyticus (strain JCSC1435).